Consider the following 490-residue polypeptide: Cardiolipin synthase 1 (490 aa).

Helical transmembrane passes span isoleucine 9–isoleucine 29 and tryptophan 42–leucine 62. 2 PLD phosphodiesterase domains span residues methionine 225–tyrosine 252 and glutamine 403–serine 430. Catalysis depends on residues histidine 230, lysine 232, aspartate 237, histidine 408, lysine 410, and aspartate 415.

Belongs to the phospholipase D family. Cardiolipin synthase subfamily.

It is found in the cell membrane. It catalyses the reaction 2 a 1,2-diacyl-sn-glycero-3-phospho-(1'-sn-glycerol) = a cardiolipin + glycerol. Functionally, catalyzes the reversible phosphatidyl group transfer from one phosphatidylglycerol molecule to another to form cardiolipin (CL) (diphosphatidylglycerol) and glycerol. In Staphylococcus epidermidis (strain ATCC 35984 / DSM 28319 / BCRC 17069 / CCUG 31568 / BM 3577 / RP62A), this protein is Cardiolipin synthase 1 (cls1).